A 367-amino-acid chain; its full sequence is Chorismate synthase (367 aa).

Positions 48 and 54 each coordinate NADP(+). Residues 125–127 (RSS), 238–239 (NA), glycine 278, 293–297 (KPTSS), and arginine 319 contribute to the FMN site.

The protein belongs to the chorismate synthase family. As to quaternary structure, homotetramer. FMNH2 serves as cofactor.

It catalyses the reaction 5-O-(1-carboxyvinyl)-3-phosphoshikimate = chorismate + phosphate. It functions in the pathway metabolic intermediate biosynthesis; chorismate biosynthesis; chorismate from D-erythrose 4-phosphate and phosphoenolpyruvate: step 7/7. In terms of biological role, catalyzes the anti-1,4-elimination of the C-3 phosphate and the C-6 proR hydrogen from 5-enolpyruvylshikimate-3-phosphate (EPSP) to yield chorismate, which is the branch point compound that serves as the starting substrate for the three terminal pathways of aromatic amino acid biosynthesis. This reaction introduces a second double bond into the aromatic ring system. This is Chorismate synthase from Xanthomonas campestris pv. campestris (strain 8004).